The following is a 158-amino-acid chain: Small ribosomal subunit protein uS15 (158 aa).

The segment covering 1-18 has biased composition (basic residues); the sequence is MARMHARKRGKSGSKRPP. Residues 1 to 21 are disordered; the sequence is MARMHARKRGKSGSKRPPRTA.

Belongs to the universal ribosomal protein uS15 family. As to quaternary structure, part of the 30S ribosomal subunit.

This Pyrococcus furiosus (strain ATCC 43587 / DSM 3638 / JCM 8422 / Vc1) protein is Small ribosomal subunit protein uS15.